The primary structure comprises 269 residues: Glutamate racemase (269 aa).

Substrate is bound by residues 7–8 and 39–40; these read DS and YG. C70 functions as the Proton donor/acceptor in the catalytic mechanism. Position 71-72 (71-72) interacts with substrate; sequence NT. The active-site Proton donor/acceptor is C194. Residue 195 to 196 coordinates substrate; that stretch reads TH.

Belongs to the aspartate/glutamate racemases family.

It catalyses the reaction L-glutamate = D-glutamate. Its pathway is cell wall biogenesis; peptidoglycan biosynthesis. Provides the (R)-glutamate required for cell wall biosynthesis. The polypeptide is Glutamate racemase (Ruegeria pomeroyi (strain ATCC 700808 / DSM 15171 / DSS-3) (Silicibacter pomeroyi)).